A 158-amino-acid chain; its full sequence is Mitotic-spindle organizing protein 2A (158 aa).

A Phosphoserine modification is found at Ser34. The segment at 84-158 is disordered; it reads RLASEPQDPA…PGKSPTQGST (75 aa). Residues 112–122 show a composition bias toward low complexity; the sequence is SAALGGVLALA. Polar residues predominate over residues 128–140; the sequence is EGSSQRMPRQPSA. Position 152 is a phosphoserine (Ser152).

This sequence belongs to the MOZART2 family. In terms of assembly, associates with the gamma-tubulin ring complex (gTuRC) consisting of TUBGCP2, TUBGCP3, TUBGCP4, TUBGCP5 and TUBGCP6 and gamma-tubulin TUBG1 or TUBG2; within the complex, interacts with TUBGCP2; the interaction plays a role in gTuRC activation.

The protein resides in the cytoplasm. The protein localises to the cytoskeleton. It is found in the microtubule organizing center. It localises to the centrosome. Its subcellular location is the spindle. Its function is as follows. Required for the recruitment and the assembly of the gamma-tubulin ring complex (gTuRC) at the centrosome. The gTuRC regulates the minus-end nucleation of alpha-beta tubulin heterodimers that grow into microtubule protafilaments, a critical step in centrosome duplication and spindle formation. This is Mitotic-spindle organizing protein 2A (MZT2A) from Homo sapiens (Human).